We begin with the raw amino-acid sequence, 599 residues long: Elongation factor 4 (599 aa).

In terms of domain architecture, tr-type G spans Lys2–Gln184. Residues Asp14–Thr19 and Asn131–Asp134 each bind GTP.

Belongs to the TRAFAC class translation factor GTPase superfamily. Classic translation factor GTPase family. LepA subfamily.

The protein resides in the cell inner membrane. It catalyses the reaction GTP + H2O = GDP + phosphate + H(+). Its function is as follows. Required for accurate and efficient protein synthesis under certain stress conditions. May act as a fidelity factor of the translation reaction, by catalyzing a one-codon backward translocation of tRNAs on improperly translocated ribosomes. Back-translocation proceeds from a post-translocation (POST) complex to a pre-translocation (PRE) complex, thus giving elongation factor G a second chance to translocate the tRNAs correctly. Binds to ribosomes in a GTP-dependent manner. The chain is Elongation factor 4 from Salmonella agona (strain SL483).